We begin with the raw amino-acid sequence, 312 residues long: E3 ubiquitin-protein ligase RNF126-B (312 aa).

Zn(2+) is bound by residues Cys13, Cys16, Cys29, and Cys32. Residues 13-32 (CHSCTAEITPRLPEYTCPRC) form a C4-type zinc finger. Disordered regions lie at residues 41–63 (PETSRNSESNSSNNSGTDQNRPS) and 96–139 (GTSG…RNEG). Over residues 44 to 55 (SRNSESNSSNNS) the composition is skewed to low complexity. The span at 102 to 115 (EETRDGESRREHQS) shows a compositional bias: basic and acidic residues. The span at 124–134 (PRARMSTRRGA) shows a compositional bias: basic residues. The RING-type zinc-finger motif lies at 228 to 269 (CPVCKEDYTVGESVRQLPCNHLFHNDCIIPWLEQHDTCPVCR). The interval 275–312 (QNTATNPPGLTDMTFSSSSTSSSSSTSPTDENNTANNS) is disordered. A compositionally biased stretch (low complexity) spans 290 to 301 (SSSSTSSSSSTS). Over residues 302–312 (PTDENNTANNS) the composition is skewed to polar residues.

It localises to the cytoplasm. The protein localises to the nucleus. The enzyme catalyses S-ubiquitinyl-[E2 ubiquitin-conjugating enzyme]-L-cysteine + [acceptor protein]-L-lysine = [E2 ubiquitin-conjugating enzyme]-L-cysteine + N(6)-ubiquitinyl-[acceptor protein]-L-lysine.. It participates in protein modification; protein ubiquitination. Its function is as follows. E3 ubiquitin-protein ligase that mediates ubiquitination oF target proteins. Depending on the associated E2 ligase, mediates 'Lys-27'-, 'Lys-29'-, 'Lys-48'- and/or 'Lys-63'-linked polyubiquitination of substrates. Part of a BAG6-dependent quality control process ensuring that proteins of the secretory pathway that are mislocalized to the cytosol are degraded by the proteasome. Probably acts by providing the ubiquitin ligase activity associated with the BAG6 complex and be responsible for ubiquitination of the hydrophobic mislocalized proteins and their targeting to the proteasome. The sequence is that of E3 ubiquitin-protein ligase RNF126-B from Xenopus laevis (African clawed frog).